Reading from the N-terminus, the 321-residue chain is Hydrolase 3 (321 aa).

The Involved in the stabilization of the negatively charged intermediate by the formation of the oxyanion hole signature appears at 80–82 (HGA). Catalysis depends on residues Ser-172 and Asp-267.

It belongs to the 'GDXG' lipolytic enzyme family.

It catalyses the reaction dihydroprecondylocarpine acetate + NADPH = (+)-vincadifformine + acetate + NADP(+). It participates in alkaloid biosynthesis. In terms of biological role, component of the seco-iridoid and derivatives monoterpenoid indole alkaloids (MIAs, e.g. vincadifformine) biosynthesis pathway. Catalyzes the conversion of O-acetylstemmadenine (OAS) to vincadifformine. May also trigger the formation of additional unknown MIAs. The polypeptide is Hydrolase 3 (Catharanthus roseus (Madagascar periwinkle)).